The sequence spans 176 residues: 3-hydroxydecanoyl-[acyl-carrier-protein] dehydratase (176 aa).

His-71 is a catalytic residue.

The protein belongs to the thioester dehydratase family. FabA subfamily. As to quaternary structure, homodimer.

It is found in the cytoplasm. It carries out the reaction a (3R)-hydroxyacyl-[ACP] = a (2E)-enoyl-[ACP] + H2O. The enzyme catalyses (3R)-hydroxydecanoyl-[ACP] = (2E)-decenoyl-[ACP] + H2O. The catalysed reaction is (2E)-decenoyl-[ACP] = (3Z)-decenoyl-[ACP]. The protein operates within lipid metabolism; fatty acid biosynthesis. Its function is as follows. Necessary for the introduction of cis unsaturation into fatty acids. Catalyzes the dehydration of (3R)-3-hydroxydecanoyl-ACP to E-(2)-decenoyl-ACP and then its isomerization to Z-(3)-decenoyl-ACP. Can catalyze the dehydratase reaction for beta-hydroxyacyl-ACPs with saturated chain lengths up to 16:0, being most active on intermediate chain length. The sequence is that of 3-hydroxydecanoyl-[acyl-carrier-protein] dehydratase from Rhodopseudomonas palustris (strain HaA2).